The sequence spans 1139 residues: DNA-directed RNA polymerase subunit beta (1139 aa).

Residues 1085-1139 (ADTSNRHTPSRPTYESVTSEDLSPSPAFTRVLRTADANASRSLEEDEDEEEEEDF) are disordered. The segment covering 1086–1106 (DTSNRHTPSRPTYESVTSEDL) has biased composition (polar residues). Over residues 1128 to 1139 (EEDEDEEEEEDF) the composition is skewed to acidic residues.

It belongs to the RNA polymerase beta chain family. As to quaternary structure, in cyanobacteria the RNAP catalytic core is composed of 2 alpha, 1 beta, 1 beta', 1 gamma and 1 omega subunit. When a sigma factor is associated with the core the holoenzyme is formed, which can initiate transcription.

It catalyses the reaction RNA(n) + a ribonucleoside 5'-triphosphate = RNA(n+1) + diphosphate. Its function is as follows. DNA-dependent RNA polymerase catalyzes the transcription of DNA into RNA using the four ribonucleoside triphosphates as substrates. This Synechococcus sp. (strain JA-2-3B'a(2-13)) (Cyanobacteria bacterium Yellowstone B-Prime) protein is DNA-directed RNA polymerase subunit beta.